Consider the following 318-residue polypeptide: Protein teg (318 aa).

In terms of domain architecture, PNPLA spans 7–182 (ITFDGGGTLG…VATNTSTASI (176 aa)). The GXGXXG signature appears at 11–16 (GGGTLG). The GXSXG motif lies at 42–46 (GNSIG). Serine 44 serves as the catalytic Nucleophile. Aspartate 169 acts as the Proton acceptor in catalysis.

Its function is as follows. Probable lipid hydrolase. In Priestia megaterium (strain ATCC 14581 / DSM 32 / CCUG 1817 / JCM 2506 / NBRC 15308 / NCIMB 9376 / NCTC 10342 / NRRL B-14308 / VKM B-512 / Ford 19) (Bacillus megaterium), this protein is Protein teg (teg).